We begin with the raw amino-acid sequence, 256 residues long: Ubiquinone/menaquinone biosynthesis C-methyltransferase UbiE (256 aa).

Positions 1–12 (MNDQRKGDHAEP) are enriched in basic and acidic residues. Residues 1 to 22 (MNDQRKGDHAEPTTHFGYQDVP) are disordered. Residues T79, D100, and 128–129 (DA) each bind S-adenosyl-L-methionine.

Belongs to the class I-like SAM-binding methyltransferase superfamily. MenG/UbiE family.

It carries out the reaction a 2-demethylmenaquinol + S-adenosyl-L-methionine = a menaquinol + S-adenosyl-L-homocysteine + H(+). It catalyses the reaction a 2-methoxy-6-(all-trans-polyprenyl)benzene-1,4-diol + S-adenosyl-L-methionine = a 5-methoxy-2-methyl-3-(all-trans-polyprenyl)benzene-1,4-diol + S-adenosyl-L-homocysteine + H(+). The protein operates within quinol/quinone metabolism; menaquinone biosynthesis; menaquinol from 1,4-dihydroxy-2-naphthoate: step 2/2. It participates in cofactor biosynthesis; ubiquinone biosynthesis. Functionally, methyltransferase required for the conversion of demethylmenaquinol (DMKH2) to menaquinol (MKH2) and the conversion of 2-polyprenyl-6-methoxy-1,4-benzoquinol (DDMQH2) to 2-polyprenyl-3-methyl-6-methoxy-1,4-benzoquinol (DMQH2). This is Ubiquinone/menaquinone biosynthesis C-methyltransferase UbiE from Pseudomonas putida (Arthrobacter siderocapsulatus).